The chain runs to 821 residues: MSTGNVYQELIRRYLVVVKKLYEGKYEVSRSFSYTMFSLLVGIIGKQYVTVFYGVPVWKEAKTHLICATDNSSLWVTTNCIPSLPDYDEVEIPDIKENFTGLIRENQIVYQAWHAMGSMLDTILKPCVKINPYCVKMQCQETENVSATTAKPITTPTTTSTVASSTEIYLDVDKNNTEEKVERNHVCRYNITGLCRDSKEEIVTNFRGDDVKCENNTCYMNHCNESVNTEDCQKGLLIRCILGCVPPGYVMLRYNEKLNNNKLCSNISAVQCTQHLVATVSSFFGFNGTMHKEGELIPIDDKYRGPEEFHQRKFVYKVPGKYGLKIECHRKGNRSVVSTPSATGLLFYHGLEPGKNLKKGMCTFKGRWGLALWSLAKELNKLNDSIKVNQTCKNFTSTGEENKQNTDKQKEFAKCIKTLKIDNYTTSGDRAAEMMMMTCQGEMFFCNVTRIMRAWNDPNEKKWYPYASCQIRQIVDDWMQVGRKIYLPPTSGFNNHIRCTHRVTEMYFEMQKIDSNETKMQIKFLPPSETSNQFVAYGAHYKLVKIMPIGIAPTDVKRHTLPEHHKEKRGAVILGILGLLSLAGSAMGSVSVALTVQSQSLVTGIVEQQKQLLKLIEQQSELLKLTIWGVKNLQTRLTSLENYIKDQALLSQWGCSWAQVCHTSVEWTNTSITPNWTSETWKEWETRTDYLQQNITEMLKQAYDREQRNTYELQKLGDLTSWASWFDFTWWVQYLKWGVFLVLGIIGLRILLALWNTISRFRQGYRPVFSQDCQQNLYRKRPDNGEEESNSLELGEHNSENLKEESLNRSLIEDLTSFARE.

Residues 1–737 (MSTGNVYQEL…FTWWVQYLKW (737 aa)) are Extracellular-facing. C67 and C80 form a disulfide bridge. N71, N98, N144, N175, N190, N215, N224, N266, N287, N333, N383, N389, N394, N423, N447, and N516 each carry an N-linked (GlcNAc...) asparagine; by host glycan. 4 cysteine pairs are disulfide-bonded: C127–C232, C134–C223, C139–C187, and C244–C272. Residues 139–186 (CQETENVSATTAKPITTPTTTSTVASSTEIYLDVDKNNTEEKVERNHV) are V1. Positions 187-223 (CRYNITGLCRDSKEEIVTNFRGDDVKCENNTCYMNHC) are V2. Residues 328 to 361 (CHRKGNRSVVSTPSATGLLFYHGLEPGKNLKKGM) are V3. 2 cysteine pairs are disulfide-bonded: C439–C499 and C446–C469. The V4 stretch occupies residues 446-469 (CNVTRIMRAWNDPNEKKWYPYASC). The interval 515–526 (SNETKMQIKFLP) is V5. The segment at 570–590 (GAVILGILGLLSLAGSAMGSV) is fusion peptide. The stretch at 607 to 627 (EQQKQLLKLIEQQSELLKLTI) forms a coiled coil. Residues N669, N675, and N694 are each glycosylated (N-linked (GlcNAc...) asparagine; by host). An MPER; binding to GalCer region spans residues 715–736 (KLGDLTSWASWFDFTWWVQYLK). The chain crosses the membrane as a helical span at residues 738 to 758 (GVFLVLGIIGLRILLALWNTI). Residues 759-821 (SRFRQGYRPV…IEDLTSFARE (63 aa)) are Cytoplasmic-facing. The short motif at 765–768 (YRPV) is the YXXV motif; contains endocytosis signal element. A disordered region spans residues 780–805 (KRPDNGEEESNSLELGEHNSENLKEE). Basic and acidic residues predominate over residues 794 to 805 (LGEHNSENLKEE).

The mature envelope protein (Env) consists of a homotrimer of non-covalently associated gp120-gp41 heterodimers. The resulting complex protrudes from the virus surface as a spike. Interacts with host CD4 and CCR5. Gp120 also interacts with the C-type lectins CD209/DC-SIGN and CLEC4M/DC-SIGNR (collectively referred to as DC-SIGN(R)). As to quaternary structure, the mature envelope protein (Env) consists of a homotrimer of non-covalently associated gp120-gp41 heterodimers. The resulting complex protrudes from the virus surface as a spike. In terms of processing, specific enzymatic cleavages in vivo yield mature proteins. Envelope glycoproteins are synthesized as an inactive precursor that is heavily N-glycosylated and processed likely by host cell furin in the Golgi to yield the mature SU and TM proteins. The cleavage site between SU and TM requires the minimal sequence [KR]-X-[KR]-R.

Its subcellular location is the virion membrane. It is found in the host cell membrane. The protein localises to the host endosome membrane. The surface protein gp120 (SU) attaches the virus to the host lymphoid cell by binding to the primary receptor CD4. This interaction induces a structural rearrangement creating a high affinity binding site for a chemokine coreceptor like CCR5. This peculiar 2 stage receptor-interaction strategy allows gp120 to maintain the highly conserved coreceptor-binding site in a cryptic conformation, protected from neutralizing antibodies. These changes are transmitted to the transmembrane protein gp41 and are thought to activate its fusogenic potential by unmasking its fusion peptide. In terms of biological role, surface protein gp120 (SU) may target the virus to gut-associated lymphoid tissue (GALT) by binding host ITGA4/ITGB7 (alpha-4/beta-7 integrins), a complex that mediates T-cell migration to the GALT. Interaction between gp120 and ITGA4/ITGB7 would allow the virus to enter GALT early in the infection, infecting and killing most of GALT's resting CD4+ T-cells. This T-cell depletion is believed to be the major insult to the host immune system leading to AIDS. Its function is as follows. The surface protein gp120 is a ligand for CD209/DC-SIGN and CLEC4M/DC-SIGNR, which are respectively found on dendritic cells (DCs), and on endothelial cells of liver sinusoids and lymph node sinuses. These interactions allow capture of viral particles at mucosal surfaces by these cells and subsequent transmission to permissive cells. DCs are professional antigen presenting cells, critical for host immunity by inducing specific immune responses against a broad variety of pathogens. They act as sentinels in various tissues where they take up antigen, process it, and present it to T-cells following migration to lymphoid organs. SIV subverts the migration properties of dendritic cells to gain access to CD4+ T-cells in lymph nodes. Virus transmission to permissive T-cells occurs either in trans (without DCs infection, through viral capture and transmission), or in cis (following DCs productive infection, through the usual CD4-gp120 interaction), thereby inducing a robust infection. In trans infection, bound virions remain infectious over days and it is proposed that they are not degraded, but protected in non-lysosomal acidic organelles within the DCs close to the cell membrane thus contributing to the viral infectious potential during DCs' migration from the periphery to the lymphoid tissues. On arrival at lymphoid tissues, intact virions recycle back to DCs' cell surface allowing virus transmission to CD4+ T-cells. Virion capture also seems to lead to MHC-II-restricted viral antigen presentation, and probably to the activation of SIV-specific CD4+ cells. Functionally, the transmembrane protein gp41 (TM) acts as a class I viral fusion protein. Under the current model, the protein has at least 3 conformational states: pre-fusion native state, pre-hairpin intermediate state, and post-fusion hairpin state. During fusion of viral and target intracellular membranes, the coiled coil regions (heptad repeats) assume a trimer-of-hairpins structure, positioning the fusion peptide in close proximity to the C-terminal region of the ectodomain. The formation of this structure appears to drive apposition and subsequent fusion of viral and target cell membranes. Complete fusion occurs in host cell endosomes. The virus undergoes clathrin-dependent internalization long before endosomal fusion, thus minimizing the surface exposure of conserved viral epitopes during fusion and reducing the efficacy of inhibitors targeting these epitopes. Membranes fusion leads to delivery of the nucleocapsid into the cytoplasm. The envelope glycoprotein gp160 precursor down-modulates cell surface CD4 antigen by interacting with it in the endoplasmic reticulum and blocking its transport to the cell surface. In terms of biological role, the gp120-gp41 heterodimer allows rapid transcytosis of the virus through CD4 negative cells such as simple epithelial monolayers of the intestinal, rectal and endocervical epithelial barriers. Both gp120 and gp41 specifically recognize glycosphingolipids galactosyl-ceramide (GalCer) or 3' sulfo-galactosyl-ceramide (GalS) present in the lipid rafts structures of epithelial cells. Binding to these alternative receptors allows the rapid transcytosis of the virus through the epithelial cells. This transcytotic vesicle-mediated transport of virions from the apical side to the basolateral side of the epithelial cells does not involve infection of the cells themselves. The protein is Envelope glycoprotein gp160 (env) of Cercopithecidae (Old World monkeys).